The chain runs to 274 residues: NH(3)-dependent NAD(+) synthetase (274 aa).

Position 46–53 (46–53 (GISGGQDS)) interacts with ATP. Asp-52 is a Mg(2+) binding site. Residue Arg-140 coordinates deamido-NAD(+). Thr-160 is an ATP binding site. Glu-165 contacts Mg(2+). Residues Lys-173 and Asp-180 each contribute to the deamido-NAD(+) site. The ATP site is built by Lys-189 and Thr-211. 260–261 (HK) is a binding site for deamido-NAD(+).

This sequence belongs to the NAD synthetase family. In terms of assembly, homodimer.

The enzyme catalyses deamido-NAD(+) + NH4(+) + ATP = AMP + diphosphate + NAD(+) + H(+). It functions in the pathway cofactor biosynthesis; NAD(+) biosynthesis; NAD(+) from deamido-NAD(+) (ammonia route): step 1/1. In terms of biological role, catalyzes the ATP-dependent amidation of deamido-NAD to form NAD. Uses ammonia as a nitrogen source. This is NH(3)-dependent NAD(+) synthetase from Listeria innocua serovar 6a (strain ATCC BAA-680 / CLIP 11262).